The primary structure comprises 360 residues: MNVPLGGIWLWLPLLLTWLTPEVSSSWWYMRATGGSSRVMCDNVPGLVSRQRQLCHRHPDVMRAIGLGVAEWTAECQHQFRQHRWNCNTLDRDHSLFGRVLLRSSRESAFVYAISSAGVVFAITRACSQGELKSCSCDPKKKGSAKDSKGTFDWGGCSDNIDYGIKFARAFVDAKERKGKDARALMNLHNNRAGRKAVKRFLKQECKCHGVSGSCTLRTCWLAMADFRKTGDYLWRKYNGAIQVVMNQDGTGFTVANKRFKKPTKNDLVYFENSPDYCIRDREAGSLGTAGRVCNLTSRGMDSCEVMCCGRGYDTSHVTRMTKCECKFHWCCAVRCQDCLEALDVHTCKAPKSADWATPT.

A signal peptide spans 1 to 25 (MNVPLGGIWLWLPLLLTWLTPEVSS). 11 disulfides stabilise this stretch: Cys76–Cys87, Cys127–Cys135, Cys137–Cys157, Cys206–Cys220, Cys208–Cys215, Cys278–Cys309, Cys294–Cys304, Cys308–Cys348, Cys324–Cys339, Cys326–Cys336, and Cys331–Cys332. Ser212 carries O-palmitoleoyl serine; by PORCN lipidation. A glycan (N-linked (GlcNAc...) asparagine) is linked at Asn295.

The protein belongs to the Wnt family. Post-translationally, palmitoleoylation is required for efficient binding to frizzled receptors. Depalmitoleoylation leads to Wnt signaling pathway inhibition. As to expression, in embryos in the developing allantois, pericardium heart, and ventral-lateral mesoderm; in adults in lung, brain, heart and placenta.

The protein resides in the secreted. It localises to the extracellular space. It is found in the extracellular matrix. Ligand for members of the frizzled family of seven transmembrane receptors. Functions in the canonical Wnt/beta-catenin signaling pathway. Functions as a upstream regulator of FGF10 expression. Plays an important role in embryonic lung development. May contribute to embryonic brain development by regulating the proliferation of dopaminergic precursors and neurons. The chain is Protein Wnt-2 (Wnt2) from Mus musculus (Mouse).